The primary structure comprises 729 residues: MIVHRIIPSRVKDPLTRFKPLKNLTTSSSPVFEPSSSSSSSSSSASFSVSDSFLVEKICFSLKQGNNNVRNHLIRLNPLAVVEVLYRCRNDLTLGQRFVDQLGFHFPNFKHTSLSLSAMIHILVRSGRLSDAQSCLLRMIRRSGVSRLEIVNSLDSTFSNCGSNDSVFDLLIRTYVQARKLREAHEAFTLLRSKGFTVSIDACNALIGSLVRIGWVELAWGVYQEISRSGVGINVYTLNIMVNALCKDGKMEKVGTFLSQVQEKGVYPDIVTYNTLISAYSSKGLMEEAFELMNAMPGKGFSPGVYTYNTVINGLCKHGKYERAKEVFAEMLRSGLSPDSTTYRSLLMEACKKGDVVETEKVFSDMRSRDVVPDLVCFSSMMSLFTRSGNLDKALMYFNSVKEAGLIPDNVIYTILIQGYCRKGMISVAMNLRNEMLQQGCAMDVVTYNTILHGLCKRKMLGEADKLFNEMTERALFPDSYTLTILIDGHCKLGNLQNAMELFQKMKEKRIRLDVVTYNTLLDGFGKVGDIDTAKEIWADMVSKEILPTPISYSILVNALCSKGHLAEAFRVWDEMISKNIKPTVMICNSMIKGYCRSGNASDGESFLEKMISEGFVPDCISYNTLIYGFVREENMSKAFGLVKKMEEEQGGLVPDVFTYNSILHGFCRQNQMKEAEVVLRKMIERGVNPDRSTYTCMINGFVSQDNLTEAFRIHDEMLQRGFSPDDKF.

The tract at residues 26–45 is disordered; it reads TSSSPVFEPSSSSSSSSSSA. Low complexity predominate over residues 27-45; it reads SSSPVFEPSSSSSSSSSSA. PPR repeat units follow at residues 112-147, 164-198, 199-233, 234-268, 269-303, 304-338, 339-373, 374-408, 409-443, 444-478, 479-513, 514-548, 549-583, 584-618, 619-649, 656-690, and 691-725; these read TSLS…GVSR, NDSV…GFTV, SIDA…GVGI, NVYT…GVYP, DIVT…GFSP, GVYT…GLSP, DSTT…DVVP, DLVC…GLIP, DNVI…GCAM, DVVT…ALFP, DSYT…RIRL, DVVT…EILP, TPIS…NIKP, TVMI…GFVP, DCIS…MEEE, DVFT…GVNP, and DRST…GFSP.

The protein belongs to the PPR family. P subfamily.

In Arabidopsis thaliana (Mouse-ear cress), this protein is Pentatricopeptide repeat-containing protein At5g01110.